A 277-amino-acid chain; its full sequence is Urease accessory protein UreD (277 aa).

Belongs to the UreD family. In terms of assembly, ureD, UreF and UreG form a complex that acts as a GTP-hydrolysis-dependent molecular chaperone, activating the urease apoprotein by helping to assemble the nickel containing metallocenter of UreC. The UreE protein probably delivers the nickel.

It localises to the cytoplasm. Required for maturation of urease via the functional incorporation of the urease nickel metallocenter. The protein is Urease accessory protein UreD of Flavobacterium johnsoniae (strain ATCC 17061 / DSM 2064 / JCM 8514 / BCRC 14874 / CCUG 350202 / NBRC 14942 / NCIMB 11054 / UW101) (Cytophaga johnsonae).